We begin with the raw amino-acid sequence, 141 residues long: Hemoglobin subunit alpha-D/D' (141 aa).

Residues 1–141 (MLTADDKKLI…VAAVLAEKYR (141 aa)) enclose the Globin domain. The heme b site is built by H58 and H87.

This sequence belongs to the globin family. In terms of assembly, heterotetramer of two alpha-D chains and two beta chains. Red blood cells.

Involved in oxygen transport from the lung to the various peripheral tissues. The sequence is that of Hemoglobin subunit alpha-D/D' (HBAD) from Gyps rueppelli (Rueppell's griffon).